A 65-amino-acid chain; its full sequence is Sulfur carrier protein TtuB (65 aa).

1-thioglycine; alternate is present on Gly-65. Gly-65 is modified (glycyl adenylate; alternate). Gly-65 participates in a covalent cross-link: Glycyl cysteine thioester (Gly-Cys) (interchain with C-192 in TtuC); alternate. A Glycyl lysine isopeptide (Gly-Lys) (interchain with K-? in acceptor proteins); alternate cross-link involves residue Gly-65.

It belongs to the TtuB family. As to quaternary structure, is able to form a heterocomplex with TtuA. In terms of processing, the C-terminal glycine residue of TtuB is first activated by TtuC as an acyl-adenylate (TtuB-COAMP), and then converted to the thiocarboxylate form (TtuB-COSH) by the cysteine desulfurases IscS or SufS.

The protein operates within tRNA modification. Functionally, required for the 2-thiolation of 5-methyluridine residue at position 54 in the T loop of tRNAs, leading to 5-methyl-2-thiouridine (m(5)s(2)U or s(2)T). This modification allows thermal stabilization of tRNAs in thermophilic microorganisms, and is essential for cell growth at high temperatures. Thiocarboxylated TtuB functions as the sulfur donor in the sulfurtransferase reaction catalyzed by TtuA. TtuB also functions as a protein modifier covalently attached to lysine residues of the target proteins TtuA and TtuC. TtuB conjugation might play a regulatory role to ensure appropriate sulfur transfer in cells. The protein is Sulfur carrier protein TtuB of Thermus thermophilus (strain ATCC BAA-163 / DSM 7039 / HB27).